Consider the following 447-residue polypeptide: Argininosuccinate synthase (447 aa).

ATP is bound by residues 20-28 (AFSGGLDTS) and A46. Y102 serves as a coordination point for L-citrulline. G132 and T134 together coordinate ATP. Positions 134, 138, and 139 each coordinate L-aspartate. N138 serves as a coordination point for L-citrulline. D139 lines the ATP pocket. Residues R142 and S195 each coordinate L-citrulline. D197 contacts ATP. 3 residues coordinate L-citrulline: T204, E206, and E283.

Belongs to the argininosuccinate synthase family. Type 2 subfamily. Homotetramer.

It is found in the cytoplasm. The enzyme catalyses L-citrulline + L-aspartate + ATP = 2-(N(omega)-L-arginino)succinate + AMP + diphosphate + H(+). Its pathway is amino-acid biosynthesis; L-arginine biosynthesis; L-arginine from L-ornithine and carbamoyl phosphate: step 2/3. This chain is Argininosuccinate synthase (argG), found in Neisseria meningitidis serogroup B (strain ATCC BAA-335 / MC58).